A 236-amino-acid chain; its full sequence is Urease accessory protein UreG (236 aa).

Positions 1–26 (MHDHSLHSGHDHGLGPGSFHDRGAPH) are disordered. 42–49 (GPVGSGKT) lines the GTP pocket.

The protein belongs to the SIMIBI class G3E GTPase family. UreG subfamily. In terms of assembly, homodimer. UreD, UreF and UreG form a complex that acts as a GTP-hydrolysis-dependent molecular chaperone, activating the urease apoprotein by helping to assemble the nickel containing metallocenter of UreC. The UreE protein probably delivers the nickel.

Its subcellular location is the cytoplasm. Facilitates the functional incorporation of the urease nickel metallocenter. This process requires GTP hydrolysis, probably effectuated by UreG. The sequence is that of Urease accessory protein UreG from Anaeromyxobacter sp. (strain Fw109-5).